The primary structure comprises 178 residues: uncharacterized protein (178 aa).

The disordered stretch occupies residues 64–103 (GVSDNTNKTTAKDNVSDKSSENEVAQPKQVTPPVDATGNT). Residues 73–84 (TAKDNVSDKSSE) show a composition bias toward basic and acidic residues.

This is an uncharacterized protein from Acidianus sp. F28 (AFV-2).